The primary structure comprises 1438 residues: DNA-directed RNA polymerase subunit beta' (1438 aa).

4 residues coordinate Zn(2+): Cys70, Cys72, Cys85, and Cys88. Positions 461, 463, and 465 each coordinate Mg(2+). Zn(2+)-binding residues include Cys821, Cys895, Cys902, and Cys905. The span at 1413–1427 shows a compositional bias: low complexity; sequence DAMAAAMGGDSAGGD. Residues 1413-1438 form a disordered region; it reads DAMAAAMGGDSAGGDTKPEAPEASEE.

This sequence belongs to the RNA polymerase beta' chain family. The RNAP catalytic core consists of 2 alpha, 1 beta, 1 beta' and 1 omega subunit. When a sigma factor is associated with the core the holoenzyme is formed, which can initiate transcription. Mg(2+) is required as a cofactor. It depends on Zn(2+) as a cofactor.

It catalyses the reaction RNA(n) + a ribonucleoside 5'-triphosphate = RNA(n+1) + diphosphate. Its function is as follows. DNA-dependent RNA polymerase catalyzes the transcription of DNA into RNA using the four ribonucleoside triphosphates as substrates. This Erythrobacter litoralis (strain HTCC2594) protein is DNA-directed RNA polymerase subunit beta'.